We begin with the raw amino-acid sequence, 91 residues long: Small ribosomal subunit protein uS19 (91 aa).

Belongs to the universal ribosomal protein uS19 family.

In terms of biological role, protein S19 forms a complex with S13 that binds strongly to the 16S ribosomal RNA. The protein is Small ribosomal subunit protein uS19 of Trichodesmium erythraeum (strain IMS101).